A 604-amino-acid chain; its full sequence is Linalool synthase Tps-5042L13, chloroplastic (604 aa).

The N-terminal 34 residues, 1 to 34 (MSSMRIYVAIMKKPSVKHVDNVDKKASKPSWRVS), are a transit peptide targeting the chloroplast. Residues arginine 323, aspartate 360, aspartate 364, arginine 501, and aspartate 504 each coordinate (2E)-geranyl diphosphate. The Mg(2+) site is built by aspartate 360 and aspartate 364. The DDXXD motif motif lies at 360-364 (DDVYD). Residues aspartate 504, threonine 508, and glutamate 512 each contribute to the Mg(2+) site.

Belongs to the terpene synthase family. Tpsb subfamily. As to quaternary structure, monomer. Mg(2+) is required as a cofactor. The cofactor is Mn(2+).

It is found in the plastid. Its subcellular location is the chloroplast. The catalysed reaction is (2E)-geranyl diphosphate + H2O = linalool + diphosphate. It participates in secondary metabolite biosynthesis; terpenoid biosynthesis. In terms of biological role, monoterpene synthase (mono-TPS) involved in the biosynthesis of monoterpenes natural products. Catalyzes the conversion of (2E)-geranyl diphosphate (GPP) into linalool. The protein is Linalool synthase Tps-5042L13, chloroplastic of Perilla frutescens (Beefsteak mint).